We begin with the raw amino-acid sequence, 624 residues long: MASIARLPDIVANKISAGEVVQRPASVVKELIENSIDAGASRITVIIKDAGRQLVQIIDNGCGMESDDVLLSVERFATSKISEVDDLDALRTLGFRGEALASISSVSHFELKTRKAGNSLGTLLRSDGGVIETPQPAQCEPGTSIAVRNLFFNVPARRKFLKSNATEFKHIHETVKAFVLSYPEIEWRMMNDDEELFHFRTSDVRERLSHFYGEGFGESLIEVTEENDYMTIGGYLGKPGMMVRQKYDQYFFINRRLIQNRMLVQAVQQAYGELLEERQSPFALLFLGLDPSLVDVNVHPAKLEVRFEDEKSIRSMVYPVVKRAVRTADFSSEASFAAPSAPTVSGEVDLPEVSSRKLSYSSFSGKASTTGDLYRNYRAGAFSAPSSVSPMLFDSSLETSLSAGSRPTPMVQESLLTPSVDQPDTGDGENPVAPEKEPKIWQLHNKYIICQIKTGLMIIDQHVAHERVLYERAIDIMNEAAPNSQQLLFPQKIDLKPWQYEVFEEISDELYRLGFNIRPFGGMSVMIEGVPPDVRDGAEATILQDMIAEYQENAAKLKLEKRDNLAKSYSCRNAIMTGQKLSVEEMRMLIDRLFATRMPYVCPHGRPVIIRLSLGELDRMFGRT.

The interval 416–436 is disordered; that stretch reads LTPSVDQPDTGDGENPVAPEK.

The protein belongs to the DNA mismatch repair MutL/HexB family.

Its function is as follows. This protein is involved in the repair of mismatches in DNA. It is required for dam-dependent methyl-directed DNA mismatch repair. May act as a 'molecular matchmaker', a protein that promotes the formation of a stable complex between two or more DNA-binding proteins in an ATP-dependent manner without itself being part of a final effector complex. In Chlorobaculum tepidum (strain ATCC 49652 / DSM 12025 / NBRC 103806 / TLS) (Chlorobium tepidum), this protein is DNA mismatch repair protein MutL.